Reading from the N-terminus, the 373-residue chain is MKLLSVLALSATATSVLGASIPVDARAEKFLIELAPGETRWVTEEEKWELKRKGQDFFDITDEEVGFTAAVAQPAIAYPTSIRHANAVNAMIATLSKENMQRDLTKLSSFQTAYYKVDFGKQSATWLQEQVQAAINTAGANRYGAKVASFRHNFAQHSIIATIPGRSPEVVVVGAHQDSINQRSPMTGRAPGADDNGSGSVTILEALRGVLRDQTILQGKAANTIEFHWYAGEEAGLLGSQAIFANYKQTGKKVKGMLNQDMTGYIKGMVDKGLKVSFGIITDNVNANLTKFVRMVITKYCSIPTIDTRCGYACSDHASANRNGYPSAMVAESPIDLLDPHLHTDSDNISYLDFDHMIEHAKLIVGFVTELAK.

The N-terminal stretch at 1-18 (MKLLSVLALSATATSVLG) is a signal peptide. Positions 176 and 195 each coordinate Zn(2+). Asn-196 carries N-linked (GlcNAc...) asparagine glycosylation. Zn(2+) contacts are provided by Glu-234 and Asp-261. A glycan (N-linked (GlcNAc...) asparagine) is linked at Asn-288. The cysteines at positions 310 and 314 are disulfide-linked. Position 343 (His-343) interacts with Zn(2+). The N-linked (GlcNAc...) asparagine glycan is linked to Asn-348.

This sequence belongs to the peptidase M28 family. M28E subfamily. In terms of assembly, monomer. It depends on Zn(2+) as a cofactor.

It localises to the secreted. With respect to regulation, activity is inhibited by EDTA, o-phenanthroline, bestatin and amastatin. Extracellular aminopeptidase which contributes to pathogenicity. This chain is Leucine aminopeptidase 1 (LAP1), found in Trichophyton rubrum (Athlete's foot fungus).